The primary structure comprises 128 residues: Holo-[acyl-carrier-protein] synthase (128 aa).

Residues D7 and E55 each coordinate Mg(2+).

The protein belongs to the P-Pant transferase superfamily. AcpS family. Mg(2+) is required as a cofactor.

Its subcellular location is the cytoplasm. It catalyses the reaction apo-[ACP] + CoA = holo-[ACP] + adenosine 3',5'-bisphosphate + H(+). Its function is as follows. Transfers the 4'-phosphopantetheine moiety from coenzyme A to a Ser of acyl-carrier-protein. The protein is Holo-[acyl-carrier-protein] synthase of Moorella thermoacetica (strain ATCC 39073 / JCM 9320).